The following is a 404-amino-acid chain: 1-deoxy-D-xylulose 5-phosphate reductoisomerase (404 aa).

8 residues coordinate NADPH: threonine 10, glycine 11, serine 12, isoleucine 13, glycine 36, arginine 37, asparagine 38, and asparagine 124. Position 125 (lysine 125) interacts with 1-deoxy-D-xylulose 5-phosphate. Glutamate 126 contacts NADPH. A Mn(2+)-binding site is contributed by aspartate 150. 1-deoxy-D-xylulose 5-phosphate contacts are provided by serine 151, glutamate 152, serine 186, and histidine 209. Residue glutamate 152 participates in Mn(2+) binding. Glycine 215 serves as a coordination point for NADPH. 1-deoxy-D-xylulose 5-phosphate is bound by residues serine 222, asparagine 227, lysine 228, and glutamate 231. A Mn(2+)-binding site is contributed by glutamate 231.

It belongs to the DXR family. Homodimer. Mg(2+) serves as cofactor. It depends on Mn(2+) as a cofactor.

The catalysed reaction is 2-C-methyl-D-erythritol 4-phosphate + NADP(+) = 1-deoxy-D-xylulose 5-phosphate + NADPH + H(+). It participates in isoprenoid biosynthesis; isopentenyl diphosphate biosynthesis via DXP pathway; isopentenyl diphosphate from 1-deoxy-D-xylulose 5-phosphate: step 1/6. Functionally, catalyzes the NADPH-dependent rearrangement and reduction of 1-deoxy-D-xylulose-5-phosphate (DXP) to 2-C-methyl-D-erythritol 4-phosphate (MEP). In Erwinia tasmaniensis (strain DSM 17950 / CFBP 7177 / CIP 109463 / NCPPB 4357 / Et1/99), this protein is 1-deoxy-D-xylulose 5-phosphate reductoisomerase.